Consider the following 141-residue polypeptide: Hemoglobin subunit alpha (141 aa).

Residues 1–141 (VLSPADKTNL…VSTVLTSKYR (141 aa)) enclose the Globin domain. At serine 3 the chain carries Phosphoserine. Lysine 7 carries the N6-succinyllysine modification. A Phosphothreonine modification is found at threonine 8. Lysine 11 is subject to N6-succinyllysine. Lysine 16 carries the N6-acetyllysine; alternate modification. Lysine 16 carries the N6-succinyllysine; alternate modification. Tyrosine 24 carries the phosphotyrosine modification. Position 40 is an N6-succinyllysine (lysine 40). Serine 49 carries the phosphoserine modification. Histidine 58 is an O2 binding site. Histidine 87 is a binding site for heme b. At serine 102 the chain carries Phosphoserine. At threonine 108 the chain carries Phosphothreonine. Residue serine 124 is modified to Phosphoserine. Residues threonine 134 and threonine 137 each carry the phosphothreonine modification. A Phosphoserine modification is found at serine 138.

It belongs to the globin family. As to quaternary structure, heterotetramer of two alpha chains and two beta chains. As to expression, red blood cells.

Its function is as follows. Involved in oxygen transport from the lung to the various peripheral tissues. The sequence is that of Hemoglobin subunit alpha from Tamias striatus (Eastern chipmunk).